The sequence spans 1267 residues: Ankyrin repeat and ELMO domain-containing protein D (1267 aa).

An ELMO domain is found at 307-466 (SHQRLLETLW…FVSGLASEVL (160 aa)). Basic and acidic residues predominate over residues 486-496 (KKKEKKSEKRG). The tract at residues 486–598 (KKKEKKSEKR…NNHILNNNHL (113 aa)) is disordered. The span at 507–598 (GSNGNINSTT…NNHILNNNHL (92 aa)) shows a compositional bias: low complexity. 4 ANK repeats span residues 655–685 (DGNS…FLNT), 689–718 (QGLT…DPFI), 767–796 (TLET…NINN), and 801–830 (SGQN…DPSI). Disordered stretches follow at residues 854-908 (NPTK…NSTS), 924-1040 (TSIN…SPIF), 1057-1082 (SPTQ…NGAE), and 1103-1215 (ENLT…PPKD). Composition is skewed to low complexity over residues 859–870 (SRSTSSTSSSTS), 895–908 (ITNN…NSTS), and 924–1033 (TSIN…STSP). Polar residues predominate over residues 1057-1080 (SPTQESPQVISTPTSPPYLSNNNG). 2 stretches are compositionally biased toward low complexity: residues 1108-1176 (NSGN…IGSH) and 1184-1213 (HNGP…VTPP).

This is Ankyrin repeat and ELMO domain-containing protein D (elmoD) from Dictyostelium discoideum (Social amoeba).